The sequence spans 197 residues: Imidazoleglycerol-phosphate dehydratase (197 aa).

The protein belongs to the imidazoleglycerol-phosphate dehydratase family.

The protein localises to the cytoplasm. The catalysed reaction is D-erythro-1-(imidazol-4-yl)glycerol 3-phosphate = 3-(imidazol-4-yl)-2-oxopropyl phosphate + H2O. It participates in amino-acid biosynthesis; L-histidine biosynthesis; L-histidine from 5-phospho-alpha-D-ribose 1-diphosphate: step 6/9. This Nitrosomonas europaea (strain ATCC 19718 / CIP 103999 / KCTC 2705 / NBRC 14298) protein is Imidazoleglycerol-phosphate dehydratase.